We begin with the raw amino-acid sequence, 301 residues long: uncharacterized protein (301 aa).

The N-terminal stretch at 1-26 (MKGFSCSRPGYLTGLLLLAVAPILTA) is a signal peptide. Cys27 is lipidated: N-palmitoyl cysteine. Cys27 is lipidated: S-diacylglycerol cysteine. Positions 46 to 243 (KLKPATIEYW…YNAKINIWSH (198 aa)) constitute a TNase-like domain. The segment at 64 to 136 (NYASEERRKE…SKGDSTGDEK (73 aa)) is disordered. Basic and acidic residues-rich tracts occupy residues 67–95 (SEER…KTED) and 120–136 (TPEK…GDEK).

It is found in the cell membrane. This is an uncharacterized protein from Mycoplasma pneumoniae (strain ATCC 29342 / M129 / Subtype 1) (Mycoplasmoides pneumoniae).